The chain runs to 191 residues: Fe/S biogenesis protein NfuA (191 aa).

Residues cysteine 149 and cysteine 152 each coordinate [4Fe-4S] cluster.

It belongs to the NfuA family. As to quaternary structure, homodimer. The cofactor is [4Fe-4S] cluster.

In terms of biological role, involved in iron-sulfur cluster biogenesis. Binds a 4Fe-4S cluster, can transfer this cluster to apoproteins, and thereby intervenes in the maturation of Fe/S proteins. Could also act as a scaffold/chaperone for damaged Fe/S proteins. The protein is Fe/S biogenesis protein NfuA of Klebsiella pneumoniae (strain 342).